A 67-amino-acid chain; its full sequence is MPKMKTKKSAAKRFRVRPGGTVKRGQAFKRHILTKKSTKNKRHLRGTATVHETNMGHMAQMLPFAGL.

The segment covering 1 to 16 (MPKMKTKKSAAKRFRV) has biased composition (basic residues). The disordered stretch occupies residues 1–22 (MPKMKTKKSAAKRFRVRPGGTV).

The protein belongs to the bacterial ribosomal protein bL35 family.

The polypeptide is Large ribosomal subunit protein bL35 (Methylibium petroleiphilum (strain ATCC BAA-1232 / LMG 22953 / PM1)).